We begin with the raw amino-acid sequence, 122 residues long: uncharacterized protein (122 aa).

The helical transmembrane segment at 93–113 threads the bilayer; it reads ILRICIVFLSLKIYTLTLVII.

The protein resides in the membrane. This is an uncharacterized protein from Saccharomyces cerevisiae (strain ATCC 204508 / S288c) (Baker's yeast).